The sequence spans 544 residues: MSRNKRSVKKRDIIEDILNEHQEEFTKEFVDIYKNFEKNLDKNFDSRFKLKINKAIDQPIFQKNSKSEYPGEYELPSILKFSDEPLIKKTKNKKINESVSKPSKCEIKPLLNPRSKSIYPFGSTKIRKQCHNHSEKMLINLSEDSISKPIVIPITSPPKKKSVIDNSIPINVAVKVPINNMEEPFTESEKDFISKCIVESPLITDNKITLPKLIPNEIIQESKIIQEPRIIPIETTQTIFPQMSQEIVSKESQNSQKSQEFQKISLNEAQEIPIKLDRNINSAICDNYTIDNADQNINPQSDGCIYRESLNSTSENLSDIEIITSNMSDTKINESDIKTSGIYNVISSNSMSESNNYGLQNSFSSGYSVEPSNKLINSSLKIIDDLKTETNPLIPKEKDYEWEELTVEDINTSFKVIGDLKEGAKLKVVDGSYLAEDKAYLSSFARYTGGQGRDRIMSFLDHLFNETKRNHEKLILEIRNDNDVDNKIPELRDLFSNMIIFLHRYDVMRNVYKSDTGTHAKLGVIRNKFFTFKESFFKDLCVPR.

This is an uncharacterized protein from Acanthamoeba polyphaga mimivirus (APMV).